A 61-amino-acid chain; its full sequence is Small ribosomal subunit protein uS14 (61 aa).

4 residues coordinate Zn(2+): C24, C27, C40, and C43.

It belongs to the universal ribosomal protein uS14 family. Zinc-binding uS14 subfamily. In terms of assembly, part of the 30S ribosomal subunit. Contacts proteins S3 and S10. The cofactor is Zn(2+).

Its function is as follows. Binds 16S rRNA, required for the assembly of 30S particles and may also be responsible for determining the conformation of the 16S rRNA at the A site. In Trichlorobacter lovleyi (strain ATCC BAA-1151 / DSM 17278 / SZ) (Geobacter lovleyi), this protein is Small ribosomal subunit protein uS14.